We begin with the raw amino-acid sequence, 1377 residues long: DNA-directed RNA polymerase subunit beta (1377 aa).

The protein belongs to the RNA polymerase beta chain family. The RNAP catalytic core consists of 2 alpha, 1 beta, 1 beta' and 1 omega subunit. When a sigma factor is associated with the core the holoenzyme is formed, which can initiate transcription.

It catalyses the reaction RNA(n) + a ribonucleoside 5'-triphosphate = RNA(n+1) + diphosphate. Functionally, DNA-dependent RNA polymerase catalyzes the transcription of DNA into RNA using the four ribonucleoside triphosphates as substrates. The sequence is that of DNA-directed RNA polymerase subunit beta from Brucella suis biovar 1 (strain 1330).